A 231-amino-acid chain; its full sequence is Ribosomal RNA small subunit methyltransferase nep-1 (231 aa).

Residues methionine 161, glycine 188, glycine 193, and 206 to 211 (ISNYPL) contribute to the S-adenosyl-L-methionine site.

Belongs to the class IV-like SAM-binding methyltransferase superfamily. RNA methyltransferase NEP1 family. In terms of assembly, homodimer.

The protein resides in the nucleus. Its subcellular location is the nucleolus. The catalysed reaction is a pseudouridine in rRNA + S-adenosyl-L-methionine = an N(1)-methylpseudouridine in rRNA + S-adenosyl-L-homocysteine + H(+). Functionally, S-adenosyl-L-methionine-dependent pseudouridine N(1)-methyltransferase that methylates a pseudouridine in 18S rRNA. Involved the biosynthesis of the hypermodified N1-methyl-N3-(3-amino-3-carboxypropyl) pseudouridine (m1acp3-Psi) conserved in eukaryotic 18S rRNA. Also has an essential role in 40S ribosomal subunit biogenesis independent on its methyltransferase activity, facilitating the incorporation of ribosomal protein S19 during the formation of pre-ribosomes. In Caenorhabditis elegans, this protein is Ribosomal RNA small subunit methyltransferase nep-1.